Consider the following 167-residue polypeptide: Protein YfbM (167 aa).

As to quaternary structure, monomer.

This is Protein YfbM (yfbM) from Escherichia coli (strain K12).